Reading from the N-terminus, the 492-residue chain is Bifunctional purine biosynthesis protein PurH (492 aa).

Residues 1 to 144 (MKKAILSVSN…KNYKHVTTIV (144 aa)) enclose the MGS-like domain.

The protein belongs to the PurH family.

It catalyses the reaction (6R)-10-formyltetrahydrofolate + 5-amino-1-(5-phospho-beta-D-ribosyl)imidazole-4-carboxamide = 5-formamido-1-(5-phospho-D-ribosyl)imidazole-4-carboxamide + (6S)-5,6,7,8-tetrahydrofolate. The catalysed reaction is IMP + H2O = 5-formamido-1-(5-phospho-D-ribosyl)imidazole-4-carboxamide. Its pathway is purine metabolism; IMP biosynthesis via de novo pathway; 5-formamido-1-(5-phospho-D-ribosyl)imidazole-4-carboxamide from 5-amino-1-(5-phospho-D-ribosyl)imidazole-4-carboxamide (10-formyl THF route): step 1/1. It functions in the pathway purine metabolism; IMP biosynthesis via de novo pathway; IMP from 5-formamido-1-(5-phospho-D-ribosyl)imidazole-4-carboxamide: step 1/1. In Staphylococcus aureus (strain Newman), this protein is Bifunctional purine biosynthesis protein PurH.